The chain runs to 88 residues: UPF0250 protein Shal_3239 (88 aa).

The protein belongs to the UPF0250 family.

The polypeptide is UPF0250 protein Shal_3239 (Shewanella halifaxensis (strain HAW-EB4)).